A 318-amino-acid polypeptide reads, in one-letter code: Beta-ketoacyl-[acyl-carrier-protein] synthase III (318 aa).

Catalysis depends on residues Cys113 and His245. The tract at residues 246–250 is ACP-binding; sequence QANIR. Residue Asn275 is part of the active site.

This sequence belongs to the thiolase-like superfamily. FabH family. Homodimer.

Its subcellular location is the cytoplasm. The catalysed reaction is malonyl-[ACP] + acetyl-CoA + H(+) = 3-oxobutanoyl-[ACP] + CO2 + CoA. The protein operates within lipid metabolism; fatty acid biosynthesis. Catalyzes the condensation reaction of fatty acid synthesis by the addition to an acyl acceptor of two carbons from malonyl-ACP. Catalyzes the first condensation reaction which initiates fatty acid synthesis and may therefore play a role in governing the total rate of fatty acid production. Possesses both acetoacetyl-ACP synthase and acetyl transacylase activities. Its substrate specificity determines the biosynthesis of branched-chain and/or straight-chain of fatty acids. The chain is Beta-ketoacyl-[acyl-carrier-protein] synthase III from Wolbachia pipientis subsp. Culex pipiens (strain wPip).